A 140-amino-acid polypeptide reads, in one-letter code: Putative 6-pyruvoyl tetrahydrobiopterin synthase (140 aa).

His19 contributes to the Zn(2+) binding site. The active-site Proton acceptor is Cys38. 2 residues coordinate Zn(2+): His44 and His46. Active-site charge relay system residues include His84 and Glu129.

The protein belongs to the PTPS family. Homohexamer formed of two homotrimers in a head to head fashion. Zn(2+) is required as a cofactor.

The enzyme catalyses 7,8-dihydroneopterin 3'-triphosphate = 6-pyruvoyl-5,6,7,8-tetrahydropterin + triphosphate + H(+). Its pathway is cofactor biosynthesis; tetrahydrobiopterin biosynthesis; tetrahydrobiopterin from 7,8-dihydroneopterin triphosphate: step 1/3. Its function is as follows. Involved in the biosynthesis of tetrahydrobiopterin, an essential cofactor of aromatic amino acid hydroxylases. Catalyzes the transformation of 7,8-dihydroneopterin triphosphate into 6-pyruvoyl tetrahydropterin. The polypeptide is Putative 6-pyruvoyl tetrahydrobiopterin synthase (ptps-1) (Caenorhabditis elegans).